The sequence spans 147 residues: Arginine repressor (147 aa).

This sequence belongs to the ArgR family.

The protein resides in the cytoplasm. The protein operates within amino-acid biosynthesis; L-arginine biosynthesis [regulation]. In terms of biological role, regulates arginine biosynthesis genes. The polypeptide is Arginine repressor (Chlamydia felis (strain Fe/C-56) (Chlamydophila felis)).